The following is a 449-amino-acid chain: Glutamyl-tRNA reductase (449 aa).

Residues 49–52, Ser-109, 114–116, and Gln-120 each bind substrate; these read TCNR and ETQ. Cys-50 (nucleophile) is an active-site residue. NADP(+) is bound at residue 189–194; sequence GAGKMS. A disordered region spans residues 427–449; that stretch reads NFTHPREEMEESDEKRSYCGESR.

The protein belongs to the glutamyl-tRNA reductase family. Homodimer.

It carries out the reaction (S)-4-amino-5-oxopentanoate + tRNA(Glu) + NADP(+) = L-glutamyl-tRNA(Glu) + NADPH + H(+). It participates in porphyrin-containing compound metabolism; protoporphyrin-IX biosynthesis; 5-aminolevulinate from L-glutamyl-tRNA(Glu): step 1/2. Catalyzes the NADPH-dependent reduction of glutamyl-tRNA(Glu) to glutamate 1-semialdehyde (GSA). This Carboxydothermus hydrogenoformans (strain ATCC BAA-161 / DSM 6008 / Z-2901) protein is Glutamyl-tRNA reductase.